The chain runs to 239 residues: uncharacterized protein (239 aa).

The protein resides in the endoplasmic reticulum. Its subcellular location is the golgi apparatus. This is an uncharacterized protein from Schizosaccharomyces pombe (strain 972 / ATCC 24843) (Fission yeast).